The following is a 178-amino-acid chain: Interleukin-10 (178 aa).

Positions Met-1–Ile-18 are cleaved as a signal peptide. The N-linked (GlcNAc...) asparagine glycan is linked to Asn-29. Disulfide bonds link Cys-30/Cys-126 and Cys-80/Cys-132. Asn-134 carries an N-linked (GlcNAc...) asparagine glycan.

The protein belongs to the IL-10 family. In terms of assembly, homodimer. Interacts with IL10RA and IL10RB.

The protein resides in the secreted. Its function is as follows. Major immune regulatory cytokine that acts on many cells of the immune system where it has profound anti-inflammatory functions, limiting excessive tissue disruption caused by inflammation. Mechanistically, IL10 binds to its heterotetrameric receptor comprising IL10RA and IL10RB leading to JAK1 and STAT2-mediated phosphorylation of STAT3. In turn, STAT3 translocates to the nucleus where it drives expression of anti-inflammatory mediators. Targets antigen-presenting cells (APCs) such as macrophages and monocytes and inhibits their release of pro-inflammatory cytokines including granulocyte-macrophage colony-stimulating factor /GM-CSF, granulocyte colony-stimulating factor/G-CSF, IL-1 alpha, IL-1 beta, IL-6, IL-8 and TNF-alpha. Also interferes with antigen presentation by reducing the expression of MHC-class II and co-stimulatory molecules, thereby inhibiting their ability to induce T cell activation. In addition, controls the inflammatory response of macrophages by reprogramming essential metabolic pathways including mTOR signaling. This is Interleukin-10 (Il10) from Mus musculus (Mouse).